The primary structure comprises 403 residues: Indoleamine 2,3-dioxygenase 1 (403 aa).

His346 serves as a coordination point for heme b. The disordered stretch occupies residues 360 to 381 (QQPKENKTSEDPSKLEAKGTGG). A compositionally biased stretch (basic and acidic residues) spans 363–376 (KENKTSEDPSKLEA).

It belongs to the indoleamine 2,3-dioxygenase family. Monomer. It depends on heme b as a cofactor. As to expression, expressed in mature dendritic cells located in lymphoid organs (including lymph nodes, spleen, tonsils, Peyers's patches, the gut lamina propria, and the thymic medulla), in some epithelial cells of the female genital tract, as well as in endothelial cells of term placenta and in lung parenchyma. Weakly or not expressed in most normal tissues, but mostly inducible in most tissues. Expressed in more than 50% of tumors, either by tumoral, stromal, or endothelial cells (expression in tumor is associated with a worse clinical outcome). Not overexpressed in tumor-draining lymph nodes.

The protein localises to the cytoplasm. It localises to the cytosol. It catalyses the reaction D-tryptophan + O2 = N-formyl-D-kynurenine. The catalysed reaction is L-tryptophan + O2 = N-formyl-L-kynurenine. It functions in the pathway amino-acid degradation; L-tryptophan degradation via kynurenine pathway; L-kynurenine from L-tryptophan: step 1/2. Activity is inhibited by and MTH-trp (methylthiohydantoin-DL-tryptophan), modestly inhibited by L-1MT (1-methyl-L-tryptophan) but not D-1MT (1-methyl-D-tryptophan). Catalyzes the first and rate limiting step of the catabolism of the essential amino acid tryptophan along the kynurenine pathway. Involved in the peripheral immune tolerance, contributing to maintain homeostasis by preventing autoimmunity or immunopathology that would result from uncontrolled and overreacting immune responses. Tryptophan shortage inhibits T lymphocytes division and accumulation of tryptophan catabolites induces T-cell apoptosis and differentiation of regulatory T-cells. Acts as a suppressor of anti-tumor immunity. Limits the growth of intracellular pathogens by depriving tryptophan. Protects the fetus from maternal immune rejection. In Homo sapiens (Human), this protein is Indoleamine 2,3-dioxygenase 1.